The sequence spans 932 residues: 2-oxoglutarate dehydrogenase E1 component (932 aa).

The protein belongs to the alpha-ketoglutarate dehydrogenase family. As to quaternary structure, homodimer. Part of the 2-oxoglutarate dehydrogenase (OGDH) complex composed of E1 (2-oxoglutarate dehydrogenase), E2 (dihydrolipoamide succinyltransferase) and E3 (dihydrolipoamide dehydrogenase); the complex contains multiple copies of the three enzymatic components (E1, E2 and E3). Thiamine diphosphate serves as cofactor.

It carries out the reaction N(6)-[(R)-lipoyl]-L-lysyl-[protein] + 2-oxoglutarate + H(+) = N(6)-[(R)-S(8)-succinyldihydrolipoyl]-L-lysyl-[protein] + CO2. In terms of biological role, E1 component of the 2-oxoglutarate dehydrogenase (OGDH) complex which catalyzes the decarboxylation of 2-oxoglutarate, the first step in the conversion of 2-oxoglutarate to succinyl-CoA and CO(2). The sequence is that of 2-oxoglutarate dehydrogenase E1 component from Staphylococcus aureus (strain USA300).